The sequence spans 124 residues: CD59 glycoprotein (124 aa).

The N-terminal stretch at 1 to 24 (MTSRGVHLLLRLLFLLAVFYSSDS) is a signal peptide. Residues 25–101 (SLMCYHCLLP…DLCNGPEDDG (77 aa)) form the UPAR/Ly6 domain. Disulfide bonds link Cys-28–Cys-51, Cys-31–Cys-38, Cys-44–Cys-64, Cys-70–Cys-88, and Cys-89–Cys-94. Asn-37 is a glycosylation site (N-linked (GlcNAc...) asparagine). Gly-101 carries GPI-anchor amidated glycine lipidation. A propeptide spans 102-124 (TALTGRTVLLVAPLLAAARNLCL) (removed in mature form).

As to quaternary structure, interacts with T-cell surface antigen CD2. In terms of processing, N- and O-glycosylated.

The protein localises to the cell membrane. It localises to the secreted. Potent inhibitor of the complement membrane attack complex (MAC) action, which protects self-cells from damage during complement activation. Acts by binding to the beta-haipins of C8 (C8A and C8B) components of the assembling MAC, forming an intermolecular beta-sheet that prevents incorporation of the multiple copies of C9 required for complete formation of the osmolytic pore. This Oryctolagus cuniculus (Rabbit) protein is CD59 glycoprotein.